We begin with the raw amino-acid sequence, 187 residues long: Casparian strip membrane protein 5 (187 aa).

Residues 1–24 (MKSGQAEIVETSKGIQKSGLMSRR) are Cytoplasmic-facing. The chain crosses the membrane as a helical span at residues 25 to 45 (IAILEFILRIVAFFNTIGSAI). At 46 to 74 (LMGTTHETLPFFTQFIRFQAEYNDLPALT) the chain is on the extracellular side. A helical membrane pass occupies residues 75–95 (FFVVANAVVSGYLIMSLTLAF). Residues 96–107 (VHIVKRKTQNTR) lie on the Cytoplasmic side of the membrane. A helical transmembrane segment spans residues 108–128 (ILLIVLDVAMLGLLSAGASSA). Residues 129-161 (AAIVYLAHNGNNKTNWFAICQQFNSFCERISGS) lie on the Extracellular side of the membrane. The N-linked (GlcNAc...) asparagine glycan is linked to Asn-140. The chain crosses the membrane as a helical span at residues 162–182 (LIGSFIAVVLLILLILLSAIA). Over 183–187 (LSRRH) the chain is Cytoplasmic.

This sequence belongs to the Casparian strip membrane proteins (CASP) family. As to quaternary structure, homodimer and heterodimers.

The protein localises to the cell membrane. Its function is as follows. Regulates membrane-cell wall junctions and localized cell wall deposition. Required for establishment of the Casparian strip membrane domain (CSD) and the subsequent formation of Casparian strips, a cell wall modification of the root endodermis that determines an apoplastic barrier between the intraorganismal apoplasm and the extraorganismal apoplasm and prevents lateral diffusion. This is Casparian strip membrane protein 5 from Arabidopsis lyrata subsp. lyrata (Lyre-leaved rock-cress).